Here is a 362-residue protein sequence, read N- to C-terminus: Probable endopolygalacturonase B (362 aa).

An N-terminal signal peptide occupies residues 1 to 20 (MHFLQNAFVAATMGAAPAAA). A propeptide spanning residues 21 to 25 (TPLEK) is cleaved from the precursor. Cysteine 28 and cysteine 43 are joined by a disulfide. PbH1 repeat units lie at residues 155-184 (ADHL…DIGQ), 185-206 (STYI…AINS), 207-227 (GEHI…SIGS), 236-257 (VNDV…RIKT), 265-287 (VENV…VVEQ), and 299-344 (TNGV…DVTG). Aspartate 199 acts as the Proton donor in catalysis. A disulfide bond links cysteine 201 and cysteine 217. Histidine 221 is a catalytic residue. Cysteines 327 and 332 form a disulfide. Asparagine 334 is a glycosylation site (N-linked (GlcNAc...) asparagine). Cysteine 351 and cysteine 360 are disulfide-bonded.

The protein belongs to the glycosyl hydrolase 28 family.

The protein resides in the secreted. The catalysed reaction is (1,4-alpha-D-galacturonosyl)n+m + H2O = (1,4-alpha-D-galacturonosyl)n + (1,4-alpha-D-galacturonosyl)m.. Functionally, involved in maceration and soft-rotting of plant tissue. Hydrolyzes the 1,4-alpha glycosidic bonds of de-esterified pectate in the smooth region of the plant cell wall. This Aspergillus kawachii (White koji mold) protein is Probable endopolygalacturonase B (pgaB).